Consider the following 258-residue polypeptide: Hydroxyacylglutathione hydrolase (258 aa).

His-54, His-56, Asp-58, His-59, His-113, Asp-138, and His-176 together coordinate Zn(2+).

The protein belongs to the metallo-beta-lactamase superfamily. Glyoxalase II family. As to quaternary structure, monomer. Zn(2+) serves as cofactor.

The catalysed reaction is an S-(2-hydroxyacyl)glutathione + H2O = a 2-hydroxy carboxylate + glutathione + H(+). It functions in the pathway secondary metabolite metabolism; methylglyoxal degradation; (R)-lactate from methylglyoxal: step 2/2. Thiolesterase that catalyzes the hydrolysis of S-D-lactoyl-glutathione to form glutathione and D-lactic acid. This Synechococcus sp. (strain ATCC 27144 / PCC 6301 / SAUG 1402/1) (Anacystis nidulans) protein is Hydroxyacylglutathione hydrolase.